A 389-amino-acid polypeptide reads, in one-letter code: Ecto-ADP-ribosyltransferase 3 (389 aa).

An N-terminal signal peptide occupies residues 1-26 (MKTGHFEIVTMLLATMILVDIFQVKA). Residues Cys43 and Cys256 are joined by a disulfide bond. The 188-residue stretch at 64-251 (QQLDTVWENA…LILQSINKTC (188 aa)) folds into the TR mART core domain. Residues Tyr101 and Arg163 each coordinate NAD(+). Asn248 carries N-linked (GlcNAc...) asparagine glycosylation. Tandem repeats lie at residues 283–292 (GEKNQKLEDH), 293–302 (SEKNWKLEDH), and 303–312 (GEKNQKLEDH). Positions 283 to 312 (GEKNQKLEDHSEKNWKLEDHGEKNQKLEDH) are 3 X 10 AA tandem repeats of [GS]-E-K-N-[QW]-K-L-E-D-H. The segment at 325-362 (MKIPEPFPLPEDKSQGNINNPTPGPVPVPGPKSHPSAS) is disordered. Residue Thr346 is glycosylated (O-linked (GalNAc...) threonine). Positions 346–356 (TPGPVPVPGPK) are enriched in pro residues. Residue Ser362 is the site of GPI-anchor amidated serine attachment. Positions 363 to 389 (SGKLLLPQFGMVIILISVSAINLFVAL) are cleaved as a propeptide — removed in mature form.

This sequence belongs to the Arg-specific ADP-ribosyltransferase family. In terms of processing, O-glycosylated with core 1 or possibly core 8 glycans. As to expression, testis specific.

It localises to the cell membrane. The enzyme catalyses L-arginyl-[protein] + NAD(+) = N(omega)-(ADP-D-ribosyl)-L-arginyl-[protein] + nicotinamide + H(+). The sequence is that of Ecto-ADP-ribosyltransferase 3 (ART3) from Homo sapiens (Human).